The sequence spans 507 residues: RNA-binding protein MEX3B (507 aa).

Positions 1–22 (MPSSLFADMERNGSGGGGGETL) are disordered. 2 consecutive KH domains span residues 59–120 (MTEC…RREI) and 155–216 (QTTI…REEI). Disordered regions lie at residues 256-279 (NQSS…LGSA) and 426-450 (SSSS…GMRR). Residues 426 to 446 (SSSSSSSSSSSSSSSSSSSSS) show a composition bias toward low complexity. The RING-type zinc finger occupies 456–496 (CSICFESEVIAALVPCGHNLFCMECANRICEKNQPQCPVCH).

The protein resides in the cytoplasm. Its subcellular location is the nucleus. The protein localises to the cytoplasmic granule. It is found in the P-body. Functionally, RNA-binding protein. May be involved in post-transcriptional regulatory mechanisms. This Xenopus laevis (African clawed frog) protein is RNA-binding protein MEX3B (mex3b).